We begin with the raw amino-acid sequence, 1782 residues long: Atrochrysone carboxylic acid synthase (1782 aa).

The segment at 41 to 270 (HTYTKDRRYP…ALPVYGGLCH (230 aa)) is N-terminal acylcarrier protein transacylase domain (SAT). One can recognise a Ketosynthase family 3 (KS3) domain in the interval 407–841 (QSKIAIVGMS…GGNSTLAIEE (435 aa)). Residues cysteine 580, histidine 716, and histidine 759 each act as for beta-ketoacyl synthase activity in the active site. The malonyl-CoA:ACP transacylase (MAT) domain stretch occupies residues 946-1266 (FAFTGQGSSY…LGILHCAGVP (321 aa)). A product template (PT) domain region spans residues 1331–1648 (TSTVQQIIHE…RILLNRFFSA (318 aa)). Residues 1335-1468 (QQIIHEQYDG…ATVYYEEASD (134 aa)) are N-terminal hotdog fold. One can recognise a PKS/mFAS DH domain in the interval 1335–1643 (QQIIHEQYDG…FRRYPRILLN (309 aa)). The Proton acceptor; for dehydratase activity role is filled by histidine 1367. The interval 1495–1643 (VANRFTRRMA…FRRYPRILLN (149 aa)) is C-terminal hotdog fold. Aspartate 1554 serves as the catalytic Proton donor; for dehydratase activity. The interval 1653 to 1703 (ARKSTPATSAPAPAPPAGSEALQPKAAPASTPAAPASADAPTTNGVKAAAE) is disordered. The span at 1678 to 1695 (AAPASTPAAPASADAPTT) shows a compositional bias: low complexity. The 78-residue stretch at 1704–1781 (PDANSTAAKA…DLKSWLLEYY (78 aa)) folds into the Carrier domain. O-(pantetheine 4'-phosphoryl)serine is present on serine 1741.

In terms of tissue distribution, specifically expressed in conidia.

The enzyme catalyses holo-[ACP] + 8 malonyl-CoA + 8 H(+) = atrochrysone carboxyl-[ACP] + 8 CO2 + 8 CoA + 2 H2O. It functions in the pathway secondary metabolite biosynthesis. Its function is as follows. Non-reducing polyketide synthase; part of the gene cluster that mediates the biosynthesis of trypacidin, a mycotoxin with antiprotozoal activity and that plays a role in the infection process. The pathway begins with the synthesis of atrochrysone thioester by the polyketide synthase (PKS) tpcC. The atrochrysone carboxyl ACP thioesterase tpcB then breaks the thioester bond and releases the atrochrysone carboxylic acid from tpcC. The decarboxylase tpcK converts atrochrysone carboxylic acid to atrochrysone which is further reduced into emodin anthrone. The next step is performed by the emodin anthrone oxygenase tpcL that catalyzes the oxidation of emodin anthrone to emodin. Emodin O-methyltransferase encoded by tpcA catalyzes methylation of the 8-hydroxy group of emodin to form questin. Ring cleavage of questin by questin oxidase tpcI leads to desmethylsulochrin via several intermediates including questin epoxide. Another methylation step catalyzed by tpcM leads to the formation of sulochrin which is further converted to monomethylsulfochrin by tpcH. Finally, the tpcJ catalyzes the conversion of monomethylsulfochrin to trypacidin. Trypacidin is toxic for human pulmonary and bronchial epithelial cells by initiating the intracellular formation of nitric oxide (NO) and hydrogen peroxide (H(2)O(2)), thus triggering host necrotic cell death. The trypacidin pathway is also able to produce endocrocin via a distinct route from the endocrocin Enc pathway. The sequence is that of Atrochrysone carboxylic acid synthase from Aspergillus fumigatus (strain ATCC MYA-4609 / CBS 101355 / FGSC A1100 / Af293) (Neosartorya fumigata).